Here is a 109-residue protein sequence, read N- to C-terminus: Mannose-specific lectin (109 aa).

The 85-residue stretch at 25–109 (MQEDCNLVLY…ARWATGTNIH (85 aa)) folds into the Bulb-type lectin domain. Alpha-D-mannopyranose contacts are provided by Gln26, Asp28, Asn30, Tyr34, Asp37, Lys38, Trp41, Ala42, Asn44, Gln57, Asp59, Asn61, Tyr65, Ile72, Trp73, Asn76, Asn83, Gln89, Asp91, Asn93, Tyr97, and Trp102. Cys29 and Cys52 are disulfide-bonded.

In terms of assembly, homotetramer; antiparallel. Detected in bulbs (at protein level).

The protein resides in the secreted. Its activity is regulated as follows. Strongly inhibited by alpha-1,6-linked mannotriose. Inhibited by various oligosaccharides of P.pastoris mannan including, Man(alpha-l,6)Man-alpha-O-Me, Man(alpha-l,2)Man, Man(alpha-l,3)Man-alpha-O-Me, Man(alpha-l,2)Man, alpha-1,2-linked mannotriose, and Man(alpha-1,6)Glc, in order of decreasing potency. Weakly inhibited by elsinotetraose. Not inhibited by maltose or nigerose. Its function is as follows. D-mannose-binding lectin which binds alpha-D-linked mannose. Displays a high affinity for alpha-(1-6)-mannose oligomers. Able to interact with both terminal and internal alpha-D-mannosyl residues. Displays antiviral activity and therefore may contribute to defense against infections. This is Mannose-specific lectin from Narcissus pseudonarcissus (Daffodil).